Consider the following 624-residue polypeptide: Actin-related protein 8 (624 aa).

Met-1 is subject to N-acetylmethionine. Over residues 1–25 (MTQAEKGDTENGKEKGGEKEKEQRG) the composition is skewed to basic and acidic residues. Residues 1 to 29 (MTQAEKGDTENGKEKGGEKEKEQRGVKRP) form a disordered region. Positions 55 and 56 each coordinate ATP. Ser-132 bears the Phosphoserine mark. 283–286 (DVGD) provides a ligand contact to ATP. Ser-412 is modified (phosphoserine). The interval 430-462 (SKQEQSAKATADRKSASKPIGFEGDLRGQSSDL) is disordered.

This sequence belongs to the actin family. ARP8 subfamily. In terms of assembly, component of the chromatin remodeling INO80 complex; specifically part of a complex module associated with the DBINO domain of INO80. Exists as monomers and dimers, but the dimer is most probably the biologically relevant form required for stable interactions with histones that exploits the twofold symmetry of the nucleosome core.

It localises to the nucleus. The protein localises to the chromosome. Plays an important role in the functional organization of mitotic chromosomes. Exhibits low basal ATPase activity, and unable to polymerize. In terms of biological role, proposed core component of the chromatin remodeling INO80 complex which is involved in transcriptional regulation, DNA replication and probably DNA repair. Required for the recruitment of INO80 (and probably the INO80 complex) to sites of DNA damage Strongly prefer nucleosomes and H3-H4 tetramers over H2A-H2B dimers, suggesting it may act as a nucleosome recognition module within the complex. The chain is Actin-related protein 8 (ACTR8) from Pongo abelii (Sumatran orangutan).